Here is a 196-residue protein sequence, read N- to C-terminus: Signaling threshold-regulating transmembrane adapter 1 (196 aa).

An N-terminal signal peptide occupies residues 1–24 (MNQADPRLRAVCLWTLTSAAMSRG). Topologically, residues 25–40 (DNCTDLLALGIPSITQ) are extracellular. Asn26 is a glycosylation site (N-linked (GlcNAc...) asparagine). A helical transmembrane segment spans residues 41 to 61 (AWGLWVLLGAVTLLFLISLAA). At 62-196 (HLSQWTRGRS…AYANSQPAAS (135 aa)) the chain is on the cytoplasmic side. A phosphoserine mark is found at Ser80 and Ser83. Tyr90 carries the phosphotyrosine modification. The tract at residues 90-93 (YGNL) is interaction with GRB2. A Phosphoserine modification is found at Ser102. At Tyr127 the chain carries Phosphotyrosine. Residues 132-167 (LRPPQGRIPGPGTPVKYSEVVLDSEPKSQASGPEPE) form a disordered region. Residue Thr144 is modified to Phosphothreonine. Residues 146–151 (VKYSEV) form an interaction with PTPN11 region. A phosphotyrosine mark is found at Tyr148 and Tyr169. The interaction with CSK stretch occupies residues 169–172 (YASV). A Phosphoserine modification is found at Ser182. Tyr188 is subject to Phosphotyrosine. An interaction with GRB2 region spans residues 188-191 (YANS).

In terms of assembly, homodimer; disulfide-linked. When phosphorylated, interacts with PTPN11/SHP2, GRB2 and CSK. Post-translationally, phosphorylated on tyrosines by LCK, FYN or ZAP70 upon TCR activation; which leads to the recruitment of PTPN11, GRB2 and CSK. As to expression, specifically expressed in T- and B-cells. Present in plasma cells but not in germinal center B-cells (at protein level). Expressed in T- and B-cell lymphoma.

It localises to the cell membrane. Functionally, negatively regulates TCR (T-cell antigen receptor)-mediated signaling in T-cells. Involved in positive selection of T-cells. The chain is Signaling threshold-regulating transmembrane adapter 1 (SIT1) from Homo sapiens (Human).